The following is a 92-amino-acid chain: Large ribosomal subunit protein bL27 (92 aa).

The segment at 1-26 (MAHKKGASSSSNGRDSESKRLGVKRF) is disordered.

Belongs to the bacterial ribosomal protein bL27 family.

This chain is Large ribosomal subunit protein bL27, found in Corynebacterium aurimucosum (strain ATCC 700975 / DSM 44827 / CIP 107346 / CN-1) (Corynebacterium nigricans).